We begin with the raw amino-acid sequence, 614 residues long: BTB/POZ domain-containing protein At5g48800 (614 aa).

In terms of domain architecture, BTB spans 43–111 (SDITIEVNGG…CYGINFEITS (69 aa)). Residues 219-484 (DWWIEDLSVL…VQVLYFEQLK (266 aa)) enclose the NPH3 domain. The residue at position 425 (Tyr-425) is a Phosphotyrosine. Disordered regions lie at residues 492–525 (SYSD…KDNY) and 583–614 (GHSS…ASTD). Positions 507 to 521 (SWRINSGALSATMSP) are enriched in polar residues. The stretch at 522 to 562 (KDNYASLRRENRELKLELARLRMRLNDLEKEHICMKRDMQR) forms a coiled coil. Over residues 583-597 (GHSSSRGSSSPSKQS) the composition is skewed to low complexity.

It belongs to the NPH3 family.

It participates in protein modification; protein ubiquitination. Its function is as follows. May act as a substrate-specific adapter of an E3 ubiquitin-protein ligase complex (CUL3-RBX1-BTB) which mediates the ubiquitination and subsequent proteasomal degradation of target proteins. This is BTB/POZ domain-containing protein At5g48800 from Arabidopsis thaliana (Mouse-ear cress).